Here is a 379-residue protein sequence, read N- to C-terminus: DNA-directed RNA polymerase subunit Rpo1C (379 aa).

The protein belongs to the RNA polymerase beta' chain family. In terms of assembly, part of the RNA polymerase complex.

The protein resides in the cytoplasm. The enzyme catalyses RNA(n) + a ribonucleoside 5'-triphosphate = RNA(n+1) + diphosphate. In terms of biological role, DNA-dependent RNA polymerase (RNAP) catalyzes the transcription of DNA into RNA using the four ribonucleoside triphosphates as substrates. Forms part of the jaw domain. This chain is DNA-directed RNA polymerase subunit Rpo1C, found in Pyrobaculum aerophilum (strain ATCC 51768 / DSM 7523 / JCM 9630 / CIP 104966 / NBRC 100827 / IM2).